A 689-amino-acid chain; its full sequence is Glycine--tRNA ligase beta subunit (689 aa).

It belongs to the class-II aminoacyl-tRNA synthetase family. In terms of assembly, tetramer of two alpha and two beta subunits.

The protein resides in the cytoplasm. It catalyses the reaction tRNA(Gly) + glycine + ATP = glycyl-tRNA(Gly) + AMP + diphosphate. In Klebsiella pneumoniae (strain 342), this protein is Glycine--tRNA ligase beta subunit.